The chain runs to 266 residues: ATP synthase subunit a (266 aa).

Transmembrane regions (helical) follow at residues 41–61 (IDTL…FWLA), 98–118 (VIAP…LMDL), 119–139 (VPID…WKIL), 152–172 (LSVL…GGWL), 178–198 (HPLG…EFIA), 216–236 (LVFI…GTPW), and 237–257 (AIFH…LTVV).

The protein belongs to the ATPase A chain family. As to quaternary structure, F-type ATPases have 2 components, CF(1) - the catalytic core - and CF(0) - the membrane proton channel. CF(1) has five subunits: alpha(3), beta(3), gamma(1), delta(1), epsilon(1). CF(0) has three main subunits: a(1), b(2) and c(9-12). The alpha and beta chains form an alternating ring which encloses part of the gamma chain. CF(1) is attached to CF(0) by a central stalk formed by the gamma and epsilon chains, while a peripheral stalk is formed by the delta and b chains.

The protein localises to the cell inner membrane. In terms of biological role, key component of the proton channel; it plays a direct role in the translocation of protons across the membrane. The polypeptide is ATP synthase subunit a (Halorhodospira halophila (strain DSM 244 / SL1) (Ectothiorhodospira halophila (strain DSM 244 / SL1))).